Consider the following 1657-residue polypeptide: Alsin (1657 aa).

RCC1 repeat units lie at residues 59 to 108 (DGEV…AVTD), 109 to 167 (NGVA…ALSI), and 169 to 218 (REIW…ALVQ). Residues 432–480 (TGAQAGSSAIGPEGLKDSREEQVKQESMQGKKSSSLVDIREEETEGGSR) are disordered. Over residues 445-455 (GLKDSREEQVK) the composition is skewed to basic and acidic residues. Residues 456-467 (QESMQGKKSSSL) show a composition bias toward polar residues. Residues serine 465, serine 466, serine 483, and serine 492 each carry the phosphoserine modification. Threonine 510 is modified (phosphothreonine). RCC1 repeat units lie at residues 525 to 576 (RTEV…ALTA) and 578 to 627 (SQVY…FLVD). The residue at position 533 (lysine 533) is an N6-acetyllysine. The DH domain maps to 690–885 (GYIASLHELA…ECLALHLGRK (196 aa)). The PH domain occupies 901–1007 (GKMTDSLRKP…RAISQAVDQA (107 aa)). MORN repeat units lie at residues 1049–1071 (YDGR…DGKM), 1072–1094 (YSGM…NKAM), 1100–1122 (YVGH…SGEV), 1123–1145 (FEGC…KLTS), 1151–1173 (FIGQ…TRGE), 1175–1197 (YMGM…FGLY), 1198–1220 (YEGN…DDTI), and 1221–1244 (YEGE…NGDY). Serine 1335 is subject to Phosphoserine. Residues 1513-1657 (KQPDIALLGF…YYQIQREKLN (145 aa)) form the VPS9 domain.

In terms of assembly, forms a heteromeric complex with ALS2CL. Interacts with ALS2CL.

Its function is as follows. May act as a GTPase regulator. Controls survival and growth of spinal motoneurons. The sequence is that of Alsin (ALS2) from Homo sapiens (Human).